Consider the following 354-residue polypeptide: GTPase Obg (354 aa).

An Obg domain is found at 1–159 (MQFIDHAEIE…KQLRLELKLL (159 aa)). The OBG-type G domain occupies 160-328 (AEVGIIGLPN…LLQEIWDVLD (169 aa)). GTP contacts are provided by residues 166-173 (GLPNAGKS), 191-195 (FTTLI), 213-216 (DIPG), 280-283 (NKLD), and 309-311 (SAV). Mg(2+) contacts are provided by S173 and T193.

The protein belongs to the TRAFAC class OBG-HflX-like GTPase superfamily. OBG GTPase family. Monomer. Mg(2+) serves as cofactor.

The protein resides in the cytoplasm. Functionally, an essential GTPase which binds GTP, GDP and possibly (p)ppGpp with moderate affinity, with high nucleotide exchange rates and a fairly low GTP hydrolysis rate. Plays a role in control of the cell cycle, stress response, ribosome biogenesis and in those bacteria that undergo differentiation, in morphogenesis control. The protein is GTPase Obg of Picosynechococcus sp. (strain ATCC 27264 / PCC 7002 / PR-6) (Agmenellum quadruplicatum).